The primary structure comprises 260 residues: Snake venom serine proteinase 4a (260 aa).

A signal peptide spans 1-18; sequence MVLIRVLANLLILQLSYA. A propeptide spanning residues 19 to 24 is cleaved from the precursor; the sequence is QMSSEL. The region spanning 25-251 is the Peptidase S1 domain; it reads VTGGDECNRN…HLDWIQRIIA (227 aa). 6 cysteine pairs are disulfide-bonded: Cys31-Cys163, Cys50-Cys66, Cys98-Cys258, Cys142-Cys212, Cys174-Cys191, and Cys202-Cys227. His65 acts as the Charge relay system in catalysis. A glycan (N-linked (GlcNAc...) asparagine) is linked at Asn103. The active-site Charge relay system is the Asp110. Ser206 (charge relay system) is an active-site residue.

The protein belongs to the peptidase S1 family. Snake venom subfamily. As to quaternary structure, monomer. In terms of tissue distribution, expressed by the venom gland.

It localises to the secreted. Snake venom serine protease that may act in the hemostasis system of the prey. The polypeptide is Snake venom serine proteinase 4a (Crotalus adamanteus (Eastern diamondback rattlesnake)).